Here is a 579-residue protein sequence, read N- to C-terminus: Arginine--tRNA ligase (579 aa).

The 'HIGH' region signature appears at 128–138 (PNLAKEMHVGH).

The protein belongs to the class-I aminoacyl-tRNA synthetase family. Monomer.

It is found in the cytoplasm. The catalysed reaction is tRNA(Arg) + L-arginine + ATP = L-arginyl-tRNA(Arg) + AMP + diphosphate. The protein is Arginine--tRNA ligase of Pseudomonas syringae pv. syringae (strain B728a).